Consider the following 331-residue polypeptide: Laforin (331 aa).

One can recognise a CBM20 domain in the interval 1 to 124 (MRFRFGVVVP…NNLVDGVYCL (124 aa)). Phosphoserine; by AMPK is present on Ser-25. Substrate contacts are provided by residues Trp-32, Lys-87, 103 to 107 (GPHHD), Asp-197, Asp-235, and Arg-241. Residues 156–323 (HYSRILPNIW…EEDFFQKFGK (168 aa)) enclose the Tyrosine-protein phosphatase domain. The active-site Phosphocysteine intermediate is the Cys-266. Positions 266 to 272 (CNAGVGR) match the Glucan phosphatase signature motif CXAGXGR motif. Substrate-binding positions include 267–272 (NAGVGR) and Tyr-304.

The protein belongs to the protein-tyrosine phosphatase family. In terms of assembly, homodimer. Interacts with itself. Interacts with PPP1R3B, PPP1R3C, PPP1R3D, HIRIP5, and EPM2AIP1. Binds glycogen and Lafora bodies. Interacts with NHLRC1/malin (via the NHL repeats). Forms a complex with NHLRC1/malin and HSP70. Interacts with PPP1R3D; in the presence of NHLC1/malin the interaction leads to ubiquitination and autophagic degradation of PPP1R3D. Interacts (via the phosphatase domain) with MAPT/Tau; the interaction dephosphorylates MAPT. Interacts with PRDM8. In terms of processing, polyubiquitinated by NHLRC1/malin. Post-translationally, phosphorylation on Ser-25 by AMPK affects the phosphatase activity of the enzyme and its ability to homodimerize and interact with NHLRC1, PPP1R3C or PRKAA2.

Its subcellular location is the cytoplasm. It localises to the endoplasmic reticulum membrane. The protein localises to the cell membrane. It catalyses the reaction O-phospho-L-tyrosyl-[protein] + H2O = L-tyrosyl-[protein] + phosphate. It carries out the reaction O-phospho-L-seryl-[protein] + H2O = L-seryl-[protein] + phosphate. The enzyme catalyses O-phospho-L-threonyl-[protein] + H2O = L-threonyl-[protein] + phosphate. Plays an important role in preventing glycogen hyperphosphorylation and the formation of insoluble aggregates, via its activity as glycogen phosphatase, and by promoting the ubiquitination of proteins involved in glycogen metabolism via its interaction with the E3 ubiquitin ligase NHLRC1/malin. Dephosphorylates phosphotyrosine and synthetic substrates, such as para-nitrophenylphosphate (pNPP), and has low activity with phosphoserine and phosphothreonine substrates (in vitro). Has also been shown to dephosphorylate MAPT. Shows strong phosphatase activity towards complex carbohydrates in vitro, avoiding glycogen hyperphosphorylation which is associated with reduced branching and formation of insoluble aggregates. Forms a complex with NHLRC1/malin and HSP70, which suppresses the cellular toxicity of misfolded proteins by promoting their degradation through the ubiquitin-proteasome system (UPS). Acts as a scaffold protein to facilitate PPP1R3C/PTG ubiquitination by NHLRC1/malin. Also promotes proteasome-independent protein degradation through the macroautophagy pathway. The polypeptide is Laforin (EPM2A) (Canis lupus familiaris (Dog)).